A 144-amino-acid chain; its full sequence is Na(+)/H(+) antiporter subunit B (144 aa).

4 consecutive transmembrane segments (helical) span residues 9–31 (VLLH…YLFF), 41–58 (FIGG…YLGF), 75–97 (IAFG…DPYL), and 117–139 (ALPF…ILTI).

Belongs to the CPA3 antiporters (TC 2.A.63) subunit B family. Forms a heterooligomeric complex that consists of seven subunits: MrpA, MrpB, MrpC, MrpD, MrpE, MrpF and MrpG.

The protein localises to the cell membrane. In terms of biological role, mnh complex is a Na(+)Li(+)/H(+) antiporter involved in Na(+) and/or Li(+) excretion and Na(+) resistance. Na(+)/H(+) antiport consumes a transmembrane electrical potential, and is thus inferred to be electrogenic. Does not transport K(+), Ca(2+) or Mg(2+). In Alkalihalophilus pseudofirmus (strain ATCC BAA-2126 / JCM 17055 / OF4) (Bacillus pseudofirmus), this protein is Na(+)/H(+) antiporter subunit B (mrpB).